Reading from the N-terminus, the 350-residue chain is Uroporphyrinogen decarboxylase (350 aa).

Residues 28–32 (RQAGR), D78, Y155, S210, and H325 each bind substrate.

This sequence belongs to the uroporphyrinogen decarboxylase family. In terms of assembly, homodimer.

Its subcellular location is the cytoplasm. The catalysed reaction is uroporphyrinogen III + 4 H(+) = coproporphyrinogen III + 4 CO2. The protein operates within porphyrin-containing compound metabolism; protoporphyrin-IX biosynthesis; coproporphyrinogen-III from 5-aminolevulinate: step 4/4. Functionally, catalyzes the decarboxylation of four acetate groups of uroporphyrinogen-III to yield coproporphyrinogen-III. The sequence is that of Uroporphyrinogen decarboxylase from Microcystis aeruginosa (strain NIES-843 / IAM M-2473).